An 821-amino-acid polypeptide reads, in one-letter code: MSDTTHLDPFADREADNYDNPIPSREYILEFLTQANVPMNRNDLFEALKLEGEEQYEGLRRRLRAMERDGQLVFTRRQCYALPEKLEMVKGYVIGHKDGHGWVRPEGSLNKEGDILLPHHQMRTLIHGDFVLVQPSGTDKRGRKEGRLVRILEERNGQIVGRFFFEYGYSYVVPDDSRIHHDILIPNDLRAGARMGNVVVIEITDRGTRNRGMMGKVVEVLGENMAPGMETQIAIRTHQIPHEWPAEVEQQVAGLTEEVPEEAKQGRVDLRALPLVTIDGEDARDFDDAVYCEAKKGGGWRLWVAIADVSYYVRPDTALDKEAINRGNSVYFPSQVVPMLPEVLSNGLCSLNPQVDRLCMVCEMTVSETGKLSGYKHYEAVMNSHARLTYTKVHEILEGDEELRERYKALVPHLEELHKMYQVLKSARDERGAIEFETVETKFIFNAQRKIESIEPVVRNDAHKLIEECMILANIASASLVEKAKEAALYRVHEPPGEERLTGFRDFLGELGLDLSGGLEPSPTDYANLMKQIGERPDKELIQTMLLRSMKQAVYNADNAGHFGLALKRYAHFTSPIRRYPDLLLHRAIKYLIAKQEGRNQDRWTPTGGYHYSFDDMDFYGEQCSMTERRADDATREVSDWLKCEYMQDHVGEELEGVVANVTSFGFFVRLTELHIDGLVHISTLANDYYHYDPIGQRLVGESFGAIYRLGDAVKVKVLAVNLDDRQIDFELVETSRKLRGQGKTAKKRADEARAKAQGKKEAATKGACGKSPTKSELKPQVEATRRPDSEGRSKPKKTKAPKKRKDQARKKSGKVRDKTK.

The RNB domain maps to Arg267–Ile593. Residues Gly652–Val733 enclose the S1 motif domain. The disordered stretch occupies residues Leu739–Lys821. Basic and acidic residues-rich tracts occupy residues Lys748–Ala764 and Thr774–Ser794. Positions Lys795–Gly814 are enriched in basic residues.

It belongs to the RNR ribonuclease family. RNase R subfamily.

The protein resides in the cytoplasm. The enzyme catalyses Exonucleolytic cleavage in the 3'- to 5'-direction to yield nucleoside 5'-phosphates.. Its function is as follows. 3'-5' exoribonuclease that releases 5'-nucleoside monophosphates and is involved in maturation of structured RNAs. This is Ribonuclease R from Vibrio cholerae serotype O1 (strain ATCC 39315 / El Tor Inaba N16961).